Here is a 248-residue protein sequence, read N- to C-terminus: Triosephosphate isomerase (248 aa).

Position 9 to 11 (9 to 11 (NWK)) interacts with substrate. The active-site Electrophile is the His-94. Residue Glu-166 is the Proton acceptor of the active site. Substrate is bound by residues Gly-172, Ser-212, and 233 to 234 (GG).

Belongs to the triosephosphate isomerase family. Homodimer.

The protein resides in the cytoplasm. It carries out the reaction D-glyceraldehyde 3-phosphate = dihydroxyacetone phosphate. It functions in the pathway carbohydrate biosynthesis; gluconeogenesis. It participates in carbohydrate degradation; glycolysis; D-glyceraldehyde 3-phosphate from glycerone phosphate: step 1/1. Functionally, involved in the gluconeogenesis. Catalyzes stereospecifically the conversion of dihydroxyacetone phosphate (DHAP) to D-glyceraldehyde-3-phosphate (G3P). This chain is Triosephosphate isomerase, found in Clostridium botulinum (strain ATCC 19397 / Type A).